We begin with the raw amino-acid sequence, 81 residues long: Photosystem I iron-sulfur center (81 aa).

4Fe-4S ferredoxin-type domains are found at residues 2–31 (AHTVKIYDTCIGCTQCVRACPTDVLEMVPW) and 37–68 (GQIASSPRTEDCVGCKRCETACPTDFLSIRVY). Cysteine 11, cysteine 14, cysteine 17, cysteine 21, cysteine 48, cysteine 51, cysteine 54, and cysteine 58 together coordinate [4Fe-4S] cluster.

In terms of assembly, the cyanobacterial PSI reaction center is composed of one copy each of PsaA,B,C,D,E,F,I,J,K,L,M and X, and forms trimeric complexes. [4Fe-4S] cluster serves as cofactor.

It is found in the cellular thylakoid membrane. It carries out the reaction reduced [plastocyanin] + hnu + oxidized [2Fe-2S]-[ferredoxin] = oxidized [plastocyanin] + reduced [2Fe-2S]-[ferredoxin]. In terms of biological role, apoprotein for the two 4Fe-4S centers FA and FB of photosystem I (PSI); essential for photochemical activity. FB is the terminal electron acceptor of PSI, donating electrons to ferredoxin. The C-terminus interacts with PsaA/B/D and helps assemble the protein into the PSI complex. Required for binding of PsaD and PsaE to PSI. PSI is a plastocyanin/cytochrome c6-ferredoxin oxidoreductase, converting photonic excitation into a charge separation, which transfers an electron from the donor P700 chlorophyll pair to the spectroscopically characterized acceptors A0, A1, FX, FA and FB in turn. The sequence is that of Photosystem I iron-sulfur center (psaC) from Synechococcus elongatus.